Consider the following 181-residue polypeptide: UPF0200 protein Ta0179 (181 aa).

6–13 (GMPGAGKD) contacts ATP.

Belongs to the UPF0200 family.

The polypeptide is UPF0200 protein Ta0179 (Thermoplasma acidophilum (strain ATCC 25905 / DSM 1728 / JCM 9062 / NBRC 15155 / AMRC-C165)).